The primary structure comprises 406 residues: Probable tRNA sulfurtransferase (406 aa).

The region spanning 60–166 (EPVMERLKQV…LNGIYLTSAK (107 aa)) is the THUMP domain. ATP-binding positions include 184-185 (ML), 209-210 (HF), R266, G288, and Q297.

This sequence belongs to the ThiI family.

The protein localises to the cytoplasm. It catalyses the reaction [ThiI sulfur-carrier protein]-S-sulfanyl-L-cysteine + a uridine in tRNA + 2 reduced [2Fe-2S]-[ferredoxin] + ATP + H(+) = [ThiI sulfur-carrier protein]-L-cysteine + a 4-thiouridine in tRNA + 2 oxidized [2Fe-2S]-[ferredoxin] + AMP + diphosphate. It carries out the reaction [ThiS sulfur-carrier protein]-C-terminal Gly-Gly-AMP + S-sulfanyl-L-cysteinyl-[cysteine desulfurase] + AH2 = [ThiS sulfur-carrier protein]-C-terminal-Gly-aminoethanethioate + L-cysteinyl-[cysteine desulfurase] + A + AMP + 2 H(+). Its pathway is cofactor biosynthesis; thiamine diphosphate biosynthesis. In terms of biological role, catalyzes the ATP-dependent transfer of a sulfur to tRNA to produce 4-thiouridine in position 8 of tRNAs, which functions as a near-UV photosensor. Also catalyzes the transfer of sulfur to the sulfur carrier protein ThiS, forming ThiS-thiocarboxylate. This is a step in the synthesis of thiazole, in the thiamine biosynthesis pathway. The sulfur is donated as persulfide by IscS. The sequence is that of Probable tRNA sulfurtransferase from Limosilactobacillus fermentum (strain NBRC 3956 / LMG 18251) (Lactobacillus fermentum).